A 123-amino-acid chain; its full sequence is MPTISQLVRKGREKLVVKGKSPALKESPQKRGVCTRVYTTTPKKPNSALRKVARVRLTNGIEVTSYIPGVGHNLQEHSVVMIRGGRVKDLPGVRYHIVRGTLDSVGVAGRKQSRSKYGAKRPS.

D89 carries the post-translational modification 3-methylthioaspartic acid.

It belongs to the universal ribosomal protein uS12 family. Part of the 30S ribosomal subunit. Contacts proteins S8 and S17. May interact with IF1 in the 30S initiation complex.

In terms of biological role, with S4 and S5 plays an important role in translational accuracy. Its function is as follows. Interacts with and stabilizes bases of the 16S rRNA that are involved in tRNA selection in the A site and with the mRNA backbone. Located at the interface of the 30S and 50S subunits, it traverses the body of the 30S subunit contacting proteins on the other side and probably holding the rRNA structure together. The combined cluster of proteins S8, S12 and S17 appears to hold together the shoulder and platform of the 30S subunit. This Myxococcus xanthus protein is Small ribosomal subunit protein uS12.